A 76-amino-acid polypeptide reads, in one-letter code: Tautomerase PptA (76 aa).

Pro2 functions as the Proton acceptor; via imino nitrogen in the catalytic mechanism.

The protein belongs to the 4-oxalocrotonate tautomerase family. PptA subfamily. In terms of assembly, homodimer.

It is found in the cytoplasm. This chain is Tautomerase PptA, found in Enterobacter sp. (strain 638).